The chain runs to 591 residues: Coiled-coil domain-containing protein 148 (591 aa).

3 coiled-coil regions span residues 166–195 (VKKQ…SIKI), 352–417 (MLAK…KKKK), and 466–498 (ERRL…KQVA).

This Homo sapiens (Human) protein is Coiled-coil domain-containing protein 148 (CCDC148).